The primary structure comprises 227 residues: MAYPFQLGFQDATSPIMEELLHFHDHTLMIVFLISSLVLYIISLMLTTKLTHTSTMDAQEVETIWTILPAIILILIALPSLRILYMMDEINNPSLTVKTMGHQWYWSYEYTDYEDLTFDSYMIPTSDLKPGELRLLEVDNRVVLPMEMTIRMLISSEDVLHSWAVPSLGLKTDAIPGRLNQTTLVSTRPGLYYGQCSEICGSNHSFMPIVLELVPLKHFEKWSASML.

Residues 1 to 14 (MAYPFQLGFQDATS) lie on the Mitochondrial intermembrane side of the membrane. A helical transmembrane segment spans residues 15 to 45 (PIMEELLHFHDHTLMIVFLISSLVLYIISLM). The Mitochondrial matrix portion of the chain corresponds to 46-59 (LTTKLTHTSTMDAQ). A helical membrane pass occupies residues 60 to 87 (EVETIWTILPAIILILIALPSLRILYMM). At 88–227 (DEINNPSLTV…HFEKWSASML (140 aa)) the chain is on the mitochondrial intermembrane side. 6 residues coordinate Cu cation: His161, Cys196, Glu198, Cys200, His204, and Met207. Glu198 is a binding site for Mg(2+).

This sequence belongs to the cytochrome c oxidase subunit 2 family. Component of the cytochrome c oxidase (complex IV, CIV), a multisubunit enzyme composed of 14 subunits. The complex is composed of a catalytic core of 3 subunits MT-CO1, MT-CO2 and MT-CO3, encoded in the mitochondrial DNA, and 11 supernumerary subunits COX4I, COX5A, COX5B, COX6A, COX6B, COX6C, COX7A, COX7B, COX7C, COX8 and NDUFA4, which are encoded in the nuclear genome. The complex exists as a monomer or a dimer and forms supercomplexes (SCs) in the inner mitochondrial membrane with NADH-ubiquinone oxidoreductase (complex I, CI) and ubiquinol-cytochrome c oxidoreductase (cytochrome b-c1 complex, complex III, CIII), resulting in different assemblies (supercomplex SCI(1)III(2)IV(1) and megacomplex MCI(2)III(2)IV(2)). Found in a complex with TMEM177, COA6, COX18, COX20, SCO1 and SCO2. Interacts with TMEM177 in a COX20-dependent manner. Interacts with COX20. Interacts with COX16. Cu cation is required as a cofactor.

It is found in the mitochondrion inner membrane. It catalyses the reaction 4 Fe(II)-[cytochrome c] + O2 + 8 H(+)(in) = 4 Fe(III)-[cytochrome c] + 2 H2O + 4 H(+)(out). Its function is as follows. Component of the cytochrome c oxidase, the last enzyme in the mitochondrial electron transport chain which drives oxidative phosphorylation. The respiratory chain contains 3 multisubunit complexes succinate dehydrogenase (complex II, CII), ubiquinol-cytochrome c oxidoreductase (cytochrome b-c1 complex, complex III, CIII) and cytochrome c oxidase (complex IV, CIV), that cooperate to transfer electrons derived from NADH and succinate to molecular oxygen, creating an electrochemical gradient over the inner membrane that drives transmembrane transport and the ATP synthase. Cytochrome c oxidase is the component of the respiratory chain that catalyzes the reduction of oxygen to water. Electrons originating from reduced cytochrome c in the intermembrane space (IMS) are transferred via the dinuclear copper A center (CU(A)) of subunit 2 and heme A of subunit 1 to the active site in subunit 1, a binuclear center (BNC) formed by heme A3 and copper B (CU(B)). The BNC reduces molecular oxygen to 2 water molecules using 4 electrons from cytochrome c in the IMS and 4 protons from the mitochondrial matrix. The chain is Cytochrome c oxidase subunit 2 (MT-CO2) from Ceratotherium simum (White rhinoceros).